The sequence spans 103 residues: Large ribosomal subunit protein bL21 (103 aa).

It belongs to the bacterial ribosomal protein bL21 family. As to quaternary structure, part of the 50S ribosomal subunit. Contacts protein L20.

Functionally, this protein binds to 23S rRNA in the presence of protein L20. This chain is Large ribosomal subunit protein bL21, found in Mycobacteroides abscessus (strain ATCC 19977 / DSM 44196 / CCUG 20993 / CIP 104536 / JCM 13569 / NCTC 13031 / TMC 1543 / L948) (Mycobacterium abscessus).